Here is an 859-residue protein sequence, read N- to C-terminus: Protein SEY1 (859 aa).

Residues 1–742 are Cytoplasmic-facing; sequence MMMNSHFAGV…KRSAIGGITQ (742 aa). One can recognise a GB1/RHD3-type G domain in the interval 49 to 291; the sequence is GFNYHLISVF…FQPQYHRRIP (243 aa). 59–66 is a binding site for GTP; that stretch reads GSQSTGKS. Residues 476 to 496 are a coiled coil; the sequence is FEHELKVYRKDLDDVSGRLRK. The segment at 525-544 is disordered; sequence LGTGRGGSGAPEHGERPPSE. Residues 743–763 traverse the membrane as a helical segment; it reads VPLYFYGLLVALGWNEIVAVL. Over 764 to 766 the chain is Lumenal; that stretch reads RNP. Residues 767 to 787 traverse the membrane as a helical segment; the sequence is VYFIFLILCAVGAYVTYTLNL. The Cytoplasmic portion of the chain corresponds to 788–859; that stretch reads WGPMIRMGNA…DAEVEDLDDI (72 aa). A disordered region spans residues 816–859; sequence SSESGRQAMAMSGNQPRGESVRMNRLNGNGKKDEDAEVEDLDDI. Over residues 850-859 the composition is skewed to acidic residues; it reads DAEVEDLDDI.

It belongs to the TRAFAC class dynamin-like GTPase superfamily. GB1/RHD3 GTPase family. RHD3 subfamily.

It localises to the endoplasmic reticulum membrane. Its function is as follows. Cooperates with the reticulon proteins and tubule-shaping DP1 family proteins to generate and maintain the structure of the tubular endoplasmic reticulum network. Has GTPase activity, which is required for its function in ER organization. The chain is Protein SEY1 from Phaeosphaeria nodorum (strain SN15 / ATCC MYA-4574 / FGSC 10173) (Glume blotch fungus).